A 430-amino-acid chain; its full sequence is Trigger factor (430 aa).

The 86-residue stretch at 163-248 (GNIAIIDFKG…IKDIKVKELP (86 aa)) folds into the PPIase FKBP-type domain.

Belongs to the FKBP-type PPIase family. Tig subfamily.

The protein resides in the cytoplasm. It carries out the reaction [protein]-peptidylproline (omega=180) = [protein]-peptidylproline (omega=0). In terms of biological role, involved in protein export. Acts as a chaperone by maintaining the newly synthesized protein in an open conformation. Functions as a peptidyl-prolyl cis-trans isomerase. In Clostridium botulinum (strain Kyoto / Type A2), this protein is Trigger factor.